The chain runs to 220 residues: Early protein OPG038 (220 aa).

The first 17 residues, 1 to 17, serve as a signal peptide directing secretion; that stretch reads MVYKLVLLFCIASLGYS.

It belongs to the orthopoxvirus OPG038 family. In terms of assembly, homooligomer. Interacts with host CD80 and CD86 when secreted. Glycosylated by host.

The protein resides in the host endoplasmic reticulum. It localises to the secreted. Plays a role in immune evasion. When secreted, inhibits T-cell activation by preventing the binding of host CD80 and CD86 to soluble CTLA4 and CD28. In the infected cell, may inhibits host NF kappa B activation. This is Early protein OPG038 (OPG038) from Homo sapiens (Human).